The following is a 274-amino-acid chain: Thiamine kinase (274 aa).

This sequence belongs to the thiamine kinase family.

It carries out the reaction thiamine + ATP = thiamine phosphate + ADP + H(+). It participates in cofactor biosynthesis; thiamine diphosphate biosynthesis; thiamine phosphate from thiamine: step 1/1. In terms of biological role, catalyzes the ATP-dependent phosphorylation of thiamine to thiamine phosphate. Is involved in thiamine salvage. In Salmonella gallinarum (strain 287/91 / NCTC 13346), this protein is Thiamine kinase.